A 606-amino-acid polypeptide reads, in one-letter code: Aspartate--tRNA(Asp/Asn) ligase (606 aa).

An L-aspartate-binding site is contributed by glutamate 175. The tract at residues 199–202 (QLFK) is aspartate. Residue arginine 221 coordinates L-aspartate. ATP contacts are provided by residues 221–223 (RDE) and glutamine 230. Histidine 453 contacts L-aspartate. Residue glutamate 487 participates in ATP binding. Position 494 (arginine 494) interacts with L-aspartate. 539-542 (GWDR) contacts ATP. Residues 564–606 (GGVDPLTDAPGTIPAEQRKETGVDFKPEKAAKAAQGEKAGKES) are disordered. Positions 579–594 (EQRKETGVDFKPEKAA) are enriched in basic and acidic residues.

Belongs to the class-II aminoacyl-tRNA synthetase family. Type 1 subfamily. Homodimer.

It localises to the cytoplasm. The catalysed reaction is tRNA(Asx) + L-aspartate + ATP = L-aspartyl-tRNA(Asx) + AMP + diphosphate. In terms of biological role, aspartyl-tRNA synthetase with relaxed tRNA specificity since it is able to aspartylate not only its cognate tRNA(Asp) but also tRNA(Asn). Reaction proceeds in two steps: L-aspartate is first activated by ATP to form Asp-AMP and then transferred to the acceptor end of tRNA(Asp/Asn). This is Aspartate--tRNA(Asp/Asn) ligase from Corynebacterium aurimucosum (strain ATCC 700975 / DSM 44827 / CIP 107346 / CN-1) (Corynebacterium nigricans).